The following is a 338-amino-acid chain: Tetraacyldisaccharide 4'-kinase (338 aa).

ATP is bound at residue 67–74 (IAGGAGKT).

This sequence belongs to the LpxK family.

It catalyses the reaction a lipid A disaccharide + ATP = a lipid IVA + ADP + H(+). Its pathway is glycolipid biosynthesis; lipid IV(A) biosynthesis; lipid IV(A) from (3R)-3-hydroxytetradecanoyl-[acyl-carrier-protein] and UDP-N-acetyl-alpha-D-glucosamine: step 6/6. Its function is as follows. Transfers the gamma-phosphate of ATP to the 4'-position of a tetraacyldisaccharide 1-phosphate intermediate (termed DS-1-P) to form tetraacyldisaccharide 1,4'-bis-phosphate (lipid IVA). This is Tetraacyldisaccharide 4'-kinase from Acidovorax ebreus (strain TPSY) (Diaphorobacter sp. (strain TPSY)).